The sequence spans 213 residues: Glycerol-3-phosphate acyltransferase (213 aa).

5 helical membrane passes run 3 to 23 (LLLF…LWIG), 68 to 88 (ILLP…GFFA), 112 to 132 (VLLG…VLVL), 134 to 154 (LFSM…LSVL), and 163 to 183 (LPNY…IIII).

This sequence belongs to the PlsY family. In terms of assembly, probably interacts with PlsX.

It localises to the cell membrane. It catalyses the reaction an acyl phosphate + sn-glycerol 3-phosphate = a 1-acyl-sn-glycero-3-phosphate + phosphate. It functions in the pathway lipid metabolism; phospholipid metabolism. Functionally, catalyzes the transfer of an acyl group from acyl-phosphate (acyl-PO(4)) to glycerol-3-phosphate (G3P) to form lysophosphatidic acid (LPA). This enzyme utilizes acyl-phosphate as fatty acyl donor, but not acyl-CoA or acyl-ACP. In Streptococcus pyogenes serotype M28 (strain MGAS6180), this protein is Glycerol-3-phosphate acyltransferase.